We begin with the raw amino-acid sequence, 242 residues long: RNA polymerase sigma factor for flagellar operon (242 aa).

Positions 55-68 (DMQQIGLIALVEAG) match the Polymerase core binding motif. A DNA-binding region (H-T-H motif) is located at residues 211–230 (LHEIALVLDLTPPRICQLHK).

The protein belongs to the sigma-70 factor family.

Sigma factors are initiation factors that promote the attachment of RNA polymerase to specific initiation sites and are then released. This alternative sigma factor is specific for the flagellin gene (fliC) expression. This Vibrio parahaemolyticus serotype O3:K6 (strain RIMD 2210633) protein is RNA polymerase sigma factor for flagellar operon (lafS).